The sequence spans 384 residues: S-adenosylmethionine synthase (384 aa).

Histidine 15 is a binding site for ATP. Position 17 (aspartate 17) interacts with Mg(2+). Glutamate 43 is a binding site for K(+). L-methionine is bound by residues glutamate 56 and glutamine 99. Residues 99–109 (QSPDINQGVDR) form a flexible loop region. ATP-binding positions include 164 to 166 (DAK), 230 to 231 (RF), aspartate 239, 245 to 246 (RK), alanine 262, and lysine 266. Aspartate 239 lines the L-methionine pocket. Lysine 270 serves as a coordination point for L-methionine.

Belongs to the AdoMet synthase family. In terms of assembly, homotetramer; dimer of dimers. It depends on Mg(2+) as a cofactor. Requires K(+) as cofactor.

The protein localises to the cytoplasm. The catalysed reaction is L-methionine + ATP + H2O = S-adenosyl-L-methionine + phosphate + diphosphate. Its pathway is amino-acid biosynthesis; S-adenosyl-L-methionine biosynthesis; S-adenosyl-L-methionine from L-methionine: step 1/1. Catalyzes the formation of S-adenosylmethionine (AdoMet) from methionine and ATP. The overall synthetic reaction is composed of two sequential steps, AdoMet formation and the subsequent tripolyphosphate hydrolysis which occurs prior to release of AdoMet from the enzyme. In Enterobacter sp. (strain 638), this protein is S-adenosylmethionine synthase.